We begin with the raw amino-acid sequence, 1115 residues long: Carbamoyl phosphate synthase large chain (1115 aa).

Residues 1–407 (MPRRTDLHHV…ALGKVMRSLE (407 aa)) are carboxyphosphate synthetic domain. ATP is bound by residues arginine 134, arginine 174, glycine 180, glycine 181, glutamate 213, isoleucine 215, glutamate 220, glycine 246, valine 247, histidine 248, glutamine 290, and glutamate 304. Residues 138-333 (KDIVAKAGGE…IAKIAAKLAI (196 aa)) enclose the ATP-grasp 1 domain. Residues glutamine 290, glutamate 304, and asparagine 306 each coordinate Mg(2+). Residues glutamine 290, glutamate 304, and asparagine 306 each coordinate Mn(2+). The oligomerization domain stretch occupies residues 408-559 (TTRAGFWTAP…ELDPAAETEV (152 aa)). The interval 560–965 (APQTERPKVL…AFAKSQTAAY (406 aa)) is carbamoyl phosphate synthetic domain. The region spanning 693–884 (GDLLSAAGLP…LAKACARIML (192 aa)) is the ATP-grasp 2 domain. 10 residues coordinate ATP: arginine 729, arginine 768, leucine 770, glutamate 775, glycine 800, isoleucine 801, histidine 802, serine 803, glutamine 843, and glutamate 855. Mg(2+)-binding residues include glutamine 843, glutamate 855, and asparagine 857. Residues glutamine 843, glutamate 855, and asparagine 857 each contribute to the Mn(2+) site. The region spanning 966-1113 (GSLPAQGTVF…QELHRVIGGV (148 aa)) is the MGS-like domain. Residues 966–1115 (GSLPAQGTVF…LHRVIGGVER (150 aa)) are allosteric domain.

Belongs to the CarB family. As to quaternary structure, composed of two chains; the small (or glutamine) chain promotes the hydrolysis of glutamine to ammonia, which is used by the large (or ammonia) chain to synthesize carbamoyl phosphate. Tetramer of heterodimers (alpha,beta)4. It depends on Mg(2+) as a cofactor. The cofactor is Mn(2+).

The enzyme catalyses hydrogencarbonate + L-glutamine + 2 ATP + H2O = carbamoyl phosphate + L-glutamate + 2 ADP + phosphate + 2 H(+). It catalyses the reaction hydrogencarbonate + NH4(+) + 2 ATP = carbamoyl phosphate + 2 ADP + phosphate + 2 H(+). The protein operates within amino-acid biosynthesis; L-arginine biosynthesis; carbamoyl phosphate from bicarbonate: step 1/1. It functions in the pathway pyrimidine metabolism; UMP biosynthesis via de novo pathway; (S)-dihydroorotate from bicarbonate: step 1/3. Its function is as follows. Large subunit of the glutamine-dependent carbamoyl phosphate synthetase (CPSase). CPSase catalyzes the formation of carbamoyl phosphate from the ammonia moiety of glutamine, carbonate, and phosphate donated by ATP, constituting the first step of 2 biosynthetic pathways, one leading to arginine and/or urea and the other to pyrimidine nucleotides. The large subunit (synthetase) binds the substrates ammonia (free or transferred from glutamine from the small subunit), hydrogencarbonate and ATP and carries out an ATP-coupled ligase reaction, activating hydrogencarbonate by forming carboxy phosphate which reacts with ammonia to form carbamoyl phosphate. The protein is Carbamoyl phosphate synthase large chain of Mycobacterium bovis (strain ATCC BAA-935 / AF2122/97).